We begin with the raw amino-acid sequence, 185 residues long: Peptidyl-tRNA hydrolase (185 aa).

A tRNA-binding site is contributed by tyrosine 14. Histidine 19 (proton acceptor) is an active-site residue. Residues tyrosine 65, asparagine 67, and asparagine 113 each coordinate tRNA.

This sequence belongs to the PTH family. In terms of assembly, monomer.

The protein localises to the cytoplasm. It carries out the reaction an N-acyl-L-alpha-aminoacyl-tRNA + H2O = an N-acyl-L-amino acid + a tRNA + H(+). Hydrolyzes ribosome-free peptidyl-tRNAs (with 1 or more amino acids incorporated), which drop off the ribosome during protein synthesis, or as a result of ribosome stalling. In terms of biological role, catalyzes the release of premature peptidyl moieties from peptidyl-tRNA molecules trapped in stalled 50S ribosomal subunits, and thus maintains levels of free tRNAs and 50S ribosomes. The polypeptide is Peptidyl-tRNA hydrolase (Rickettsia bellii (strain RML369-C)).